The chain runs to 195 residues: ATP-dependent Clp protease proteolytic subunit (195 aa).

The Nucleophile role is filled by S99. H124 is a catalytic residue.

This sequence belongs to the peptidase S14 family. Fourteen ClpP subunits assemble into 2 heptameric rings which stack back to back to give a disk-like structure with a central cavity, resembling the structure of eukaryotic proteasomes.

It is found in the cytoplasm. The enzyme catalyses Hydrolysis of proteins to small peptides in the presence of ATP and magnesium. alpha-casein is the usual test substrate. In the absence of ATP, only oligopeptides shorter than five residues are hydrolyzed (such as succinyl-Leu-Tyr-|-NHMec, and Leu-Tyr-Leu-|-Tyr-Trp, in which cleavage of the -Tyr-|-Leu- and -Tyr-|-Trp bonds also occurs).. Cleaves peptides in various proteins in a process that requires ATP hydrolysis. Has a chymotrypsin-like activity. Plays a major role in the degradation of misfolded proteins. The sequence is that of ATP-dependent Clp protease proteolytic subunit from Caldicellulosiruptor saccharolyticus (strain ATCC 43494 / DSM 8903 / Tp8T 6331).